Consider the following 425-residue polypeptide: Serine--tRNA ligase (425 aa).

228–230 contributes to the L-serine binding site; it reads TAE. 259–261 contacts ATP; it reads RSE. Glu-282 serves as a coordination point for L-serine. An ATP-binding site is contributed by 346-349; that stretch reads EIAS. Ser-382 serves as a coordination point for L-serine.

Belongs to the class-II aminoacyl-tRNA synthetase family. Type-1 seryl-tRNA synthetase subfamily. As to quaternary structure, homodimer. The tRNA molecule binds across the dimer.

It is found in the cytoplasm. The catalysed reaction is tRNA(Ser) + L-serine + ATP = L-seryl-tRNA(Ser) + AMP + diphosphate + H(+). It carries out the reaction tRNA(Sec) + L-serine + ATP = L-seryl-tRNA(Sec) + AMP + diphosphate + H(+). Its pathway is aminoacyl-tRNA biosynthesis; selenocysteinyl-tRNA(Sec) biosynthesis; L-seryl-tRNA(Sec) from L-serine and tRNA(Sec): step 1/1. Catalyzes the attachment of serine to tRNA(Ser). Is also able to aminoacylate tRNA(Sec) with serine, to form the misacylated tRNA L-seryl-tRNA(Sec), which will be further converted into selenocysteinyl-tRNA(Sec). The protein is Serine--tRNA ligase of Rickettsia akari (strain Hartford).